The sequence spans 544 residues: 4-coumarate--CoA ligase 2 (544 aa).

ATP-binding residues include Ser-190, Ser-191, Gly-192, Thr-193, Thr-194, and Lys-198. Tyr-240 is a binding site for (E)-4-coumaroyl-AMP. Lys-261 is a binding site for CoA. The interval 263-332 is SBD1; it reads DIVPFLELIQ…AKFPNAKLGQ (70 aa). Residues Ala-310, Gln-332, Gly-333, Thr-337, and Met-345 each coordinate (E)-4-coumaroyl-AMP. Residues Gln-332, Gly-333, and Thr-337 each coordinate ATP. Positions 333 to 400 are SBD2; that stretch reads GYGMTEAGPV…IRGDQIMKGY (68 aa). Residues Asp-421 and Arg-436 each coordinate ATP. Positions 438 and 442 each coordinate (E)-4-coumaroyl-AMP. CoA is bound by residues Lys-444 and Gly-445. Lys-527 is an ATP binding site.

This sequence belongs to the ATP-dependent AMP-binding enzyme family. Mg(2+) is required as a cofactor.

It catalyses the reaction (E)-4-coumarate + ATP + CoA = (E)-4-coumaroyl-CoA + AMP + diphosphate. The enzyme catalyses (E)-4-coumarate + ATP + H(+) = (E)-4-coumaroyl-AMP + diphosphate. The catalysed reaction is (E)-4-coumaroyl-AMP + CoA = (E)-4-coumaroyl-CoA + AMP + H(+). Its pathway is phytoalexin biosynthesis; 3,4',5-trihydroxystilbene biosynthesis; 3,4',5-trihydroxystilbene from trans-4-coumarate: step 1/2. In terms of biological role, carboxylate--CoA ligase that may use 4-coumarate as substrate. Follows a two-step reaction mechanism, wherein the carboxylate substrate first undergoes adenylation by ATP, followed by a thioesterification in the presence of CoA to yield the final CoA thioester. This is 4-coumarate--CoA ligase 2 (4CL2) from Petroselinum crispum (Parsley).